Reading from the N-terminus, the 178-residue chain is Deoxycytidylate deaminase (178 aa).

The region spanning Glu14–Phe145 is the CMP/dCMP-type deaminase domain. His84 is a Zn(2+) binding site. Catalysis depends on Glu86, which acts as the Proton donor. The Zn(2+) site is built by Cys110 and Cys113. Position 174 is a phosphoserine (Ser174).

This sequence belongs to the cytidine and deoxycytidylate deaminase family. Homohexamer. It depends on Zn(2+) as a cofactor.

It catalyses the reaction dCMP + H2O + H(+) = dUMP + NH4(+). The catalysed reaction is 5-hydroxymethyl-dCMP + H2O + H(+) = 5-hydroxymethyl-dUMP + NH4(+). Allosteric enzyme whose activity is greatly influenced by the end products of its metabolic pathway, dCTP and dTTP. Catalyzes the deamination of dCMP to dUMP, providing the nucleoside monophosphate substrate for the thymidylate synthase/TYMS. Also, part of a nucleotide salvage pathway that eliminates epigenetically modified 5-hydroxymethyl-dCMP (hmdCMP) in a two-step process entailing deamination to cytotoxic 5-hydroxymethyl-dUMP (hmdUMP), followed by its hydrolysis into 5-hydroxymethyluracil (hmU) and 2-deoxy-D-ribose 5-phosphate (deoxyribosephosphate). Catalyzes the first step in that pathway, the deamination of 5-hydroxymethyl-dCMP (hmdCMP). This chain is Deoxycytidylate deaminase, found in Mus musculus (Mouse).